The chain runs to 188 residues: ATP synthase subunit b 1 (188 aa).

Residues 7-27 (LSVLALAMLAANPAFAAGGGI) traverse the membrane as a helical segment.

Belongs to the ATPase B chain family. In terms of assembly, F-type ATPases have 2 components, F(1) - the catalytic core - and F(0) - the membrane proton channel. F(1) has five subunits: alpha(3), beta(3), gamma(1), delta(1), epsilon(1). F(0) has three main subunits: a(1), b(2) and c(10-14). The alpha and beta chains form an alternating ring which encloses part of the gamma chain. F(1) is attached to F(0) by a central stalk formed by the gamma and epsilon chains, while a peripheral stalk is formed by the delta and b chains.

It is found in the cell inner membrane. F(1)F(0) ATP synthase produces ATP from ADP in the presence of a proton or sodium gradient. F-type ATPases consist of two structural domains, F(1) containing the extramembraneous catalytic core and F(0) containing the membrane proton channel, linked together by a central stalk and a peripheral stalk. During catalysis, ATP synthesis in the catalytic domain of F(1) is coupled via a rotary mechanism of the central stalk subunits to proton translocation. Functionally, component of the F(0) channel, it forms part of the peripheral stalk, linking F(1) to F(0). This Roseobacter denitrificans (strain ATCC 33942 / OCh 114) (Erythrobacter sp. (strain OCh 114)) protein is ATP synthase subunit b 1.